The primary structure comprises 136 residues: UPF0216 protein PF0452 (136 aa).

It belongs to the UPF0216 family.

The polypeptide is UPF0216 protein PF0452 (Pyrococcus furiosus (strain ATCC 43587 / DSM 3638 / JCM 8422 / Vc1)).